Consider the following 625-residue polypeptide: Interferon-induced GTP-binding protein MxE (625 aa).

A Dynamin-type G domain is found at 40–313 (DLNLPAIAVI…LVEHIAKNLP (274 aa)). The segment at 50–57 (GDQSSGKS) is G1 motif. 50-57 (GDQSSGKS) is a GTP binding site. The G2 motif stretch occupies residues 75–77 (VTR). Residues 151–154 (DLPG) are G3 motif. GTP-binding positions include 151 to 155 (DLPGI) and 220 to 223 (TKPD). The G4 motif stretch occupies residues 220–223 (TKPD). The segment at 252 to 255 (KCRG) is G5 motif. Residues 536–625 (VREMAYHLTS…RVLSKFVHSA (90 aa)) enclose the GED domain.

It belongs to the TRAFAC class dynamin-like GTPase superfamily. Dynamin/Fzo/YdjA family.

Its subcellular location is the cytoplasm. In Danio rerio (Zebrafish), this protein is Interferon-induced GTP-binding protein MxE (mxe).